The chain runs to 314 residues: Vacuolar membrane protein FOSTERSO_4058 (314 aa).

The disordered stretch occupies residues 32–59; sequence KPTSSVVSETSSKSLPSLTSSAFSTSSG. The chain crosses the membrane as a helical span at residues 93 to 113; that stretch reads VYIAVGAVIGAIFISILIWWL. Residues serine 148, serine 254, and serine 274 each carry the phosphoserine modification. The tract at residues 240-309 is disordered; it reads EERKLNLNRP…PSMFLDDVLN (70 aa). A compositionally biased stretch (basic and acidic residues) spans 254–269; that stretch reads SPERKEKKINSMEGYH.

It belongs to the PRM5 family.

The protein localises to the vacuole membrane. This Saccharomyces cerevisiae (strain FostersO) (Baker's yeast) protein is Vacuolar membrane protein FOSTERSO_4058.